Consider the following 196-residue polypeptide: Fe/S biogenesis protein NfuA (196 aa).

Residues Cys-154 and Cys-157 each coordinate [4Fe-4S] cluster.

The protein belongs to the NfuA family. In terms of assembly, homodimer. It depends on [4Fe-4S] cluster as a cofactor.

Its function is as follows. Involved in iron-sulfur cluster biogenesis. Binds a 4Fe-4S cluster, can transfer this cluster to apoproteins, and thereby intervenes in the maturation of Fe/S proteins. Could also act as a scaffold/chaperone for damaged Fe/S proteins. The chain is Fe/S biogenesis protein NfuA from Blochmanniella pennsylvanica (strain BPEN).